Here is a 368-residue protein sequence, read N- to C-terminus: 2-aminoethylphosphonate--pyruvate transaminase (368 aa).

The residue at position 192 (Lys-192) is an N6-(pyridoxal phosphate)lysine.

It belongs to the class-V pyridoxal-phosphate-dependent aminotransferase family. PhnW subfamily. Homodimer. Pyridoxal 5'-phosphate is required as a cofactor.

The catalysed reaction is (2-aminoethyl)phosphonate + pyruvate = phosphonoacetaldehyde + L-alanine. In terms of biological role, involved in phosphonate degradation. The sequence is that of 2-aminoethylphosphonate--pyruvate transaminase from Pseudomonas putida (strain GB-1).